Reading from the N-terminus, the 145-residue chain is Large ribosomal subunit protein bL17 (145 aa).

This sequence belongs to the bacterial ribosomal protein bL17 family. In terms of assembly, part of the 50S ribosomal subunit. Contacts protein L32.

The polypeptide is Large ribosomal subunit protein bL17 (Francisella tularensis subsp. tularensis (strain FSC 198)).